A 308-amino-acid chain; its full sequence is UPF0282 protein PYRAB09800 (308 aa).

Belongs to the UPF0282 family.

The chain is UPF0282 protein PYRAB09800 from Pyrococcus abyssi (strain GE5 / Orsay).